Consider the following 136-residue polypeptide: Histone H3.1 (136 aa).

The segment at 1–43 is disordered; it reads MARTKQTARKSTGGKAPRKQLATKAARKSAPATGGVKKPHRYR. At arginine 3 the chain carries Asymmetric dimethylarginine; by PRMT6; alternate. The residue at position 3 (arginine 3) is a Citrulline; alternate. A Phosphothreonine; by HASPIN and VRK1 modification is found at threonine 4. Position 5 is an allysine; alternate (lysine 5). Lysine 5 is modified (N6,N6,N6-trimethyllysine; alternate). An N6,N6-dimethyllysine; alternate modification is found at lysine 5. Lysine 5 carries the post-translational modification N6-(2-hydroxyisobutyryl)lysine; alternate. Position 5 is an N6-(beta-hydroxybutyryl)lysine; alternate (lysine 5). Lysine 5 carries the post-translational modification N6-acetyllysine; alternate. Residue lysine 5 is modified to N6-crotonyllysine; alternate. Position 5 is an N6-methyllysine; alternate (lysine 5). Glutamine 6 carries the post-translational modification 5-glutamyl dopamine; alternate. Glutamine 6 bears the 5-glutamyl serotonin; alternate mark. Threonine 7 is subject to Phosphothreonine; by PKC. Residue arginine 9 is modified to Citrulline; alternate. Arginine 9 carries the symmetric dimethylarginine; by PRMT5; alternate modification. An N6,N6,N6-trimethyllysine; alternate modification is found at lysine 10. Lysine 10 carries the N6,N6-dimethyllysine; alternate modification. Lysine 10 carries the post-translational modification N6-(2-hydroxyisobutyryl)lysine; alternate. At lysine 10 the chain carries N6-(beta-hydroxybutyryl)lysine; alternate. Lysine 10 carries the post-translational modification N6-acetyllysine; alternate. Lysine 10 is subject to N6-crotonyllysine; alternate. N6-methyllysine; alternate is present on lysine 10. The residue at position 10 (lysine 10) is an N6-butyryllysine; alternate. Lysine 10 bears the N6-lactoyllysine; alternate mark. Residue serine 11 is modified to ADP-ribosylserine; alternate. Serine 11 is subject to Phosphoserine; alternate; by AURKB, AURKC, RPS6KA3, RPS6KA4 and RPS6KA5. Residue threonine 12 is modified to Phosphothreonine; by PKC and CHEK1. Position 15 is an N6-(2-hydroxyisobutyryl)lysine; alternate (lysine 15). Residue lysine 15 is modified to N6-(beta-hydroxybutyryl)lysine; alternate. At lysine 15 the chain carries N6-acetyllysine; alternate. Lysine 15 carries the N6-lactoyllysine; alternate modification. At lysine 15 the chain carries N6-glutaryllysine; alternate. Lysine 15 carries the N6-succinyllysine; alternate modification. Arginine 18 is subject to Citrulline; alternate. Arginine 18 bears the Asymmetric dimethylarginine; by CARM1; alternate mark. An N6-(2-hydroxyisobutyryl)lysine; alternate mark is found at lysine 19 and lysine 24. An N6-(beta-hydroxybutyryl)lysine; alternate mark is found at lysine 19 and lysine 24. N6-acetyllysine; alternate is present on residues lysine 19 and lysine 24. Residues lysine 19 and lysine 24 each carry the N6-crotonyllysine; alternate modification. Lysine 19 and lysine 24 each carry N6-methyllysine; alternate. N6-butyryllysine; alternate occurs at positions 19 and 24. 2 positions are modified to N6-lactoyllysine; alternate: lysine 19 and lysine 24. Lysine 19 and lysine 24 each carry N6-glutaryllysine; alternate. Residue lysine 19 is the site of N6-decanoyllysine attachment. Arginine 27 bears the Citrulline mark. An N6,N6,N6-trimethyllysine; alternate modification is found at lysine 28. Lysine 28 is subject to N6,N6-dimethyllysine; alternate. Position 28 is an N6-(2-hydroxyisobutyryl)lysine; alternate (lysine 28). Residue lysine 28 is modified to N6-(beta-hydroxybutyryl)lysine; alternate. The residue at position 28 (lysine 28) is an N6-acetyllysine; alternate. Position 28 is an N6-crotonyllysine; alternate (lysine 28). An N6-methyllysine; alternate modification is found at lysine 28. Lysine 28 is subject to N6-lactoyllysine; alternate. Residue lysine 28 is modified to N6-glutaryllysine; alternate. Serine 29 bears the ADP-ribosylserine; alternate mark. A Phosphoserine; alternate; by AURKB, AURKC and RPS6KA5 modification is found at serine 29. Residue lysine 37 is modified to N6,N6,N6-trimethyllysine; alternate. An N6,N6-dimethyllysine; alternate modification is found at lysine 37. Lysine 37 is subject to N6-(2-hydroxyisobutyryl)lysine; alternate. Lysine 37 bears the N6-acetyllysine; alternate mark. N6-methyllysine; alternate is present on lysine 37. Position 38 is an N6-methyllysine (lysine 38). Tyrosine 42 bears the Phosphotyrosine mark. N6,N6,N6-trimethyllysine; alternate is present on lysine 57. N6-(2-hydroxyisobutyryl)lysine; alternate is present on lysine 57. Position 57 is an N6-(beta-hydroxybutyryl)lysine; alternate (lysine 57). Position 57 is an N6-acetyllysine; alternate (lysine 57). An N6-crotonyllysine; alternate modification is found at lysine 57. Lysine 57 carries the N6-lactoyllysine; alternate modification. Lysine 57 bears the N6-glutaryllysine; alternate mark. Residue lysine 57 is modified to N6-succinyllysine; alternate. N6-methyllysine; by EHMT2; alternate is present on lysine 57. Serine 58 bears the Phosphoserine mark. 2 positions are modified to N6-(2-hydroxyisobutyryl)lysine; alternate: lysine 65 and lysine 80. 2 positions are modified to N6-methyllysine; alternate: lysine 65 and lysine 80. The residue at position 80 (lysine 80) is an N6,N6,N6-trimethyllysine; alternate. N6,N6-dimethyllysine; alternate is present on lysine 80. N6-(beta-hydroxybutyryl)lysine; alternate is present on lysine 80. Lysine 80 bears the N6-acetyllysine; alternate mark. An N6-lactoyllysine; alternate modification is found at lysine 80. Position 80 is an N6-glutaryllysine; alternate (lysine 80). Residue lysine 80 is modified to N6-succinyllysine; alternate. Phosphothreonine is present on threonine 81. Residue serine 87 is modified to Phosphoserine. Threonine 108 is modified (phosphothreonine). 2 positions are modified to N6-acetyllysine; alternate: lysine 116 and lysine 123. N6-glutaryllysine; alternate is present on residues lysine 116 and lysine 123. Lysine 123 carries the post-translational modification N6-(2-hydroxyisobutyryl)lysine; alternate. Lysine 123 bears the N6-(beta-hydroxybutyryl)lysine; alternate mark. At lysine 123 the chain carries N6-methyllysine; alternate. Position 123 is an N6-succinyllysine; alternate (lysine 123).

This sequence belongs to the histone H3 family. The nucleosome is a histone octamer containing two molecules each of H2A, H2B, H3 and H4 assembled in one H3-H4 heterotetramer and two H2A-H2B heterodimers. The octamer wraps approximately 147 bp of DNA. Interacts with TONSL; CHAF1A; CHAF1B; MCM2 and DNAJC9. Interacts with NASP; NASP is a histone chaperone that stabilizes and maintains a soluble pool of Histone H3-H4 dimers. Acetylation is generally linked to gene activation. Acetylation on Lys-10 (H3K9ac) impairs methylation at Arg-9 (H3R8me2s). Acetylation on Lys-19 (H3K18ac) and Lys-24 (H3K24ac) favors methylation at Arg-18 (H3R17me). Acetylation at Lys-123 (H3K122ac) by EP300/p300 plays a central role in chromatin structure: localizes at the surface of the histone octamer and stimulates transcription, possibly by promoting nucleosome instability. Post-translationally, citrullination at Arg-9 (H3R8ci) and/or Arg-18 (H3R17ci) by PADI4 impairs methylation and represses transcription. In terms of processing, asymmetric dimethylation at Arg-18 (H3R17me2a) by CARM1 is linked to gene activation. Symmetric dimethylation at Arg-9 (H3R8me2s) by PRMT5 is linked to gene repression. Asymmetric dimethylation at Arg-3 (H3R2me2a) by PRMT6 is linked to gene repression and is mutually exclusive with H3 Lys-5 methylation (H3K4me2 and H3K4me3). H3R2me2a is present at the 3' of genes regardless of their transcription state and is enriched on inactive promoters, while it is absent on active promoters. Methylation at Lys-5 (H3K4me), Lys-37 (H3K36me) and Lys-80 (H3K79me) are linked to gene activation. Methylation at Lys-5 (H3K4me) facilitates subsequent acetylation of H3 and H4. Methylation at Lys-80 (H3K79me) is associated with DNA double-strand break (DSB) responses and is a specific target for TP53BP1. Methylation at Lys-10 (H3K9me) and Lys-28 (H3K27me) are linked to gene repression. Methylation at Lys-10 (H3K9me) is a specific target for HP1 proteins (CBX1, CBX3 and CBX5) and prevents subsequent phosphorylation at Ser-11 (H3S10ph) and acetylation of H3 and H4. Methylation at Lys-5 (H3K4me) and Lys-80 (H3K79me) require preliminary monoubiquitination of H2B at 'Lys-120'. Methylation at Lys-10 (H3K9me) and Lys-28 (H3K27me) are enriched in inactive X chromosome chromatin. Monomethylation at Lys-57 (H3K56me1) by EHMT2/G9A in G1 phase promotes interaction with PCNA and is required for DNA replication. Post-translationally, phosphorylated at Thr-4 (H3T3ph) by VRK1. Phosphorylated at Thr-4 (H3T3ph) by HASPIN during prophase and dephosphorylated during anaphase. Phosphorylation at Ser-11 (H3S10ph) by AURKB is crucial for chromosome condensation and cell-cycle progression during mitosis and meiosis. In addition phosphorylation at Ser-11 (H3S10ph) by RPS6KA4 and RPS6KA5 is important during interphase because it enables the transcription of genes following external stimulation, like mitogens, stress, growth factors or UV irradiation and result in the activation of genes, such as c-fos and c-jun. Phosphorylation at Ser-11 (H3S10ph), which is linked to gene activation, prevents methylation at Lys-10 (H3K9me) but facilitates acetylation of H3 and H4. Phosphorylation at Ser-11 (H3S10ph) by AURKB mediates the dissociation of HP1 proteins (CBX1, CBX3 and CBX5) from heterochromatin. Phosphorylation at Ser-11 (H3S10ph) is also an essential regulatory mechanism for neoplastic cell transformation. Phosphorylated at Ser-29 (H3S28ph) by MAP3K20 isoform 1, RPS6KA5 or AURKB during mitosis or upon ultraviolet B irradiation. Phosphorylation at Thr-7 (H3T6ph) by PRKCB is a specific tag for epigenetic transcriptional activation that prevents demethylation of Lys-5 (H3K4me) by LSD1/KDM1A. At centromeres, specifically phosphorylated at Thr-12 (H3T11ph) from prophase to early anaphase, by DAPK3 and PKN1. Phosphorylation at Thr-12 (H3T11ph) by PKN1 or isoform M2 of PKM (PKM2) is a specific tag for epigenetic transcriptional activation that promotes demethylation of Lys-10 (H3K9me) by KDM4C/JMJD2C. Phosphorylation at Thr-12 (H3T11ph) by chromatin-associated CHEK1 regulates the transcription of cell cycle regulatory genes by modulating acetylation of Lys-10 (H3K9ac). Phosphorylation at Tyr-42 (H3Y41ph) by JAK2 promotes exclusion of CBX5 (HP1 alpha) from chromatin. In terms of processing, monoubiquitinated by RAG1 in lymphoid cells, monoubiquitination is required for V(D)J recombination. Ubiquitinated by the CUL4-DDB-RBX1 complex in response to ultraviolet irradiation. This may weaken the interaction between histones and DNA and facilitate DNA accessibility to repair proteins. Lysine deamination at Lys-5 (H3K4all) to form allysine is mediated by LOXL2. Allysine formation by LOXL2 only takes place on H3K4me3 and results in gene repression. Post-translationally, crotonylation (Kcr) is specifically present in male germ cells and marks testis-specific genes in post-meiotic cells, including X-linked genes that escape sex chromosome inactivation in haploid cells. Crotonylation marks active promoters and enhancers and confers resistance to transcriptional repressors. It is also associated with post-meiotically activated genes on autosomes. In terms of processing, butyrylation of histones marks active promoters and competes with histone acetylation. It is present during late spermatogenesis. Succinylation at Lys-80 (H3K79succ) by KAT2A takes place with a maximum frequency around the transcription start sites of genes. It gives a specific tag for epigenetic transcription activation. Desuccinylation at Lys-123 (H3K122succ) by SIRT7 in response to DNA damage promotes chromatin condensation and double-strand breaks (DSBs) repair. Post-translationally, serine ADP-ribosylation by PARP1 or PARP2 constitutes the primary form of ADP-ribosylation of proteins in response to DNA damage. Serine ADP-ribosylation at Ser-11 (H3S10ADPr) promotes recruitment of CHD1L. H3S10ADPr is mutually exclusive with phosphorylation at Ser-11 (H3S10ph) and impairs acetylation at Lys-10 (H3K9ac). In terms of processing, serotonylated by TGM2 at Gln-6 (H3Q5ser) during serotonergic neuron differentiation. H3Q5ser is associated with trimethylation of Lys-5 (H3K4me3) and enhances general transcription factor IID (TFIID) complex-binding to H3K4me3, thereby facilitating transcription. Dopaminylated by TGM2 at Gln-6 (H3Q5dop) in ventral tegmental area (VTA) neurons. H3Q5dop mediates neurotransmission-independent role of nuclear dopamine by regulating relapse-related transcriptional plasticity in the reward system. Post-translationally, lactylated in macrophages by EP300/P300 by using lactoyl-CoA directly derived from endogenous or exogenous lactate, leading to stimulates gene transcription.

Its subcellular location is the nucleus. The protein resides in the chromosome. In terms of biological role, core component of nucleosome. Nucleosomes wrap and compact DNA into chromatin, limiting DNA accessibility to the cellular machineries which require DNA as a template. Histones thereby play a central role in transcription regulation, DNA repair, DNA replication and chromosomal stability. DNA accessibility is regulated via a complex set of post-translational modifications of histones, also called histone code, and nucleosome remodeling. The sequence is that of Histone H3.1 from Homo sapiens (Human).